The primary structure comprises 456 residues: Histidine--tRNA ligase (456 aa).

The span at 1–11 shows a compositional bias: polar residues; it reads MTQNENPSAQS. The disordered stretch occupies residues 1 to 22; sequence MTQNENPSAQSGAKPEDKARPA.

It belongs to the class-II aminoacyl-tRNA synthetase family. As to quaternary structure, homodimer.

The protein resides in the cytoplasm. It carries out the reaction tRNA(His) + L-histidine + ATP = L-histidyl-tRNA(His) + AMP + diphosphate + H(+). The polypeptide is Histidine--tRNA ligase (Cupriavidus pinatubonensis (strain JMP 134 / LMG 1197) (Cupriavidus necator (strain JMP 134))).